The chain runs to 542 residues: Major facilitator superfamily domain-containing protein 6-like (542 aa).

A run of 11 helical transmembrane segments spans residues 46–66, 89–109, 198–218, 246–266, 272–292, 321–341, 352–372, 381–401, 404–424, 444–464, and 469–489; these read LGLS…LALL, LLSS…GILV, MFFL…PLEW, VGAA…FCRI, FYSY…LPIY, VTVI…LWLM, GICL…AGPL, WMLV…SFLW, WAVM…WWSV, FEAF…GFVV, and VNVL…ALAV.

This sequence belongs to the major facilitator superfamily. MFSD6 family.

The protein localises to the membrane. This is Major facilitator superfamily domain-containing protein 6-like (mfsd6l) from Danio rerio (Zebrafish).